A 341-amino-acid polypeptide reads, in one-letter code: Biotin synthase (341 aa).

The Radical SAM core domain maps to 40–267 (AEIQVSTLLS…RSMVRLSAGR (228 aa)). [4Fe-4S] cluster contacts are provided by cysteine 55, cysteine 59, and cysteine 62. The [2Fe-2S] cluster site is built by cysteine 99, cysteine 130, cysteine 190, and arginine 262.

This sequence belongs to the radical SAM superfamily. Biotin synthase family. As to quaternary structure, homodimer. It depends on [4Fe-4S] cluster as a cofactor. [2Fe-2S] cluster serves as cofactor.

The enzyme catalyses (4R,5S)-dethiobiotin + (sulfur carrier)-SH + 2 reduced [2Fe-2S]-[ferredoxin] + 2 S-adenosyl-L-methionine = (sulfur carrier)-H + biotin + 2 5'-deoxyadenosine + 2 L-methionine + 2 oxidized [2Fe-2S]-[ferredoxin]. The protein operates within cofactor biosynthesis; biotin biosynthesis; biotin from 7,8-diaminononanoate: step 2/2. Its function is as follows. Catalyzes the conversion of dethiobiotin (DTB) to biotin by the insertion of a sulfur atom into dethiobiotin via a radical-based mechanism. In Xylella fastidiosa (strain M12), this protein is Biotin synthase.